The following is a 295-amino-acid chain: Tetrahydromethanopterin S-methyltransferase subunit E (295 aa).

7 helical membrane passes run 4–24 (MITG…AGAA), 60–80 (GEPV…FVLM), 87–107 (VIMA…TYAV), 140–160 (GFIV…PIPG), 161–181 (FAHP…IGAI), 234–254 (YGGP…FWNT), and 255–275 (IVFG…LLII).

The protein belongs to the MtrE family. In terms of assembly, the complex is composed of 8 subunits; MtrA, MtrB, MtrC, MtrD, MtrE, MtrF, MtrG and MtrH.

Its subcellular location is the cell membrane. It catalyses the reaction 5-methyl-5,6,7,8-tetrahydromethanopterin + coenzyme M + 2 Na(+)(in) = 5,6,7,8-tetrahydromethanopterin + methyl-coenzyme M + 2 Na(+)(out). Its pathway is one-carbon metabolism; methanogenesis from CO(2); methyl-coenzyme M from 5,10-methylene-5,6,7,8-tetrahydromethanopterin: step 2/2. Its function is as follows. Part of a complex that catalyzes the formation of methyl-coenzyme M and tetrahydromethanopterin from coenzyme M and methyl-tetrahydromethanopterin. This is an energy-conserving, sodium-ion translocating step. The sequence is that of Tetrahydromethanopterin S-methyltransferase subunit E from Methanothermobacter marburgensis (strain ATCC BAA-927 / DSM 2133 / JCM 14651 / NBRC 100331 / OCM 82 / Marburg) (Methanobacterium thermoautotrophicum).